The following is a 555-amino-acid chain: Connector enhancer of kinase suppressor of ras 3 (555 aa).

The 66-residue stretch at 7–72 (WSPKQVVDWT…LEAVDLLCAL (66 aa)) folds into the SAM domain. Residues 80 to 174 (NMKNLVLKLR…TTVQKDCFVA (95 aa)) enclose the CRIC domain. The 83-residue stretch at 211–293 (EVHLPNIKPG…GVVLLLKKRP (83 aa)) folds into the PDZ domain. Disordered regions lie at residues 309–334 (WKPP…DTSL), 347–390 (PPPP…FLDQ), and 517–537 (IPFQ…KSSS). The 222-residue stretch at 325 to 546 (SPESTMDTSL…STEPSLLVSW (222 aa)) folds into the DUF1170 domain. Phosphoserine is present on residues S381 and S383.

Belongs to the CNKSR family. Interacts with epithelial sodium channel ENaC. Interacts directly with SCNN1A (ENaC subunit alpha) and SCNN1B (ENaC subunit beta) C-terminal tails. Interacts with ENaC regulatory proteins NEDD4L, RAF1 and SGK1.

Its subcellular location is the cytoplasm. It is found in the apical cell membrane. Involved in transepithelial sodium transport. Regulates aldosterone-induced and epithelial sodium channel (ENaC)-mediated sodium transport through regulation of ENaC cell surface expression. Acts as a scaffold protein coordinating the assembly of an ENaC-regulatory complex (ERC). The chain is Connector enhancer of kinase suppressor of ras 3 (CNKSR3) from Homo sapiens (Human).